Consider the following 98-residue polypeptide: NADH-ubiquinone oxidoreductase chain 4L (98 aa).

3 consecutive transmembrane segments (helical) span residues 2–22 (TLVM…TLMF), 26–46 (LMST…MAVI), and 61–81 (IIIL…LAMV).

It belongs to the complex I subunit 4L family. In terms of assembly, core subunit of respiratory chain NADH dehydrogenase (Complex I) which is composed of 45 different subunits.

Its subcellular location is the mitochondrion inner membrane. The enzyme catalyses a ubiquinone + NADH + 5 H(+)(in) = a ubiquinol + NAD(+) + 4 H(+)(out). Core subunit of the mitochondrial membrane respiratory chain NADH dehydrogenase (Complex I) which catalyzes electron transfer from NADH through the respiratory chain, using ubiquinone as an electron acceptor. Part of the enzyme membrane arm which is embedded in the lipid bilayer and involved in proton translocation. This Nyctomys sumichrasti (Sumichrast's vesper rat) protein is NADH-ubiquinone oxidoreductase chain 4L (MT-ND4L).